The following is a 520-amino-acid chain: GMP synthase [glutamine-hydrolyzing] (520 aa).

The Glutamine amidotransferase type-1 domain maps to 9–202 (SVLIVDFGSQ…IHNVAGIKGD (194 aa)). Catalysis depends on Cys86, which acts as the Nucleophile. Active-site residues include His176 and Glu178. A GMPS ATP-PPase domain is found at 203–395 (WSMSAYRQKA…LGLPDSFIGR (193 aa)). 230 to 236 (SGGVDSS) is a binding site for ATP.

In terms of assembly, homodimer.

It catalyses the reaction XMP + L-glutamine + ATP + H2O = GMP + L-glutamate + AMP + diphosphate + 2 H(+). It functions in the pathway purine metabolism; GMP biosynthesis; GMP from XMP (L-Gln route): step 1/1. Functionally, catalyzes the synthesis of GMP from XMP. This Rhizobium etli (strain ATCC 51251 / DSM 11541 / JCM 21823 / NBRC 15573 / CFN 42) protein is GMP synthase [glutamine-hydrolyzing].